A 199-amino-acid chain; its full sequence is uncharacterized protein (199 aa).

A helical transmembrane segment spans residues 17–37; the sequence is AGAVTLGIGFFALASALWFLI.

It localises to the membrane. This is an uncharacterized protein from Homo sapiens (Human).